A 207-amino-acid polypeptide reads, in one-letter code: Large ribosomal subunit protein uL4 (207 aa).

Residues 49–78 (HAVKNRSAVSGGGRKPWRQKGTGRARQGSI) are disordered.

The protein belongs to the universal ribosomal protein uL4 family. In terms of assembly, part of the 50S ribosomal subunit.

One of the primary rRNA binding proteins, this protein initially binds near the 5'-end of the 23S rRNA. It is important during the early stages of 50S assembly. It makes multiple contacts with different domains of the 23S rRNA in the assembled 50S subunit and ribosome. In terms of biological role, forms part of the polypeptide exit tunnel. The chain is Large ribosomal subunit protein uL4 from Streptococcus gordonii (strain Challis / ATCC 35105 / BCRC 15272 / CH1 / DL1 / V288).